Consider the following 243-residue polypeptide: Orotidine 5'-phosphate decarboxylase (243 aa).

Substrate-binding positions include aspartate 16, lysine 38, 65-74 (DLKLHDIPNT), threonine 120, arginine 181, glutamine 190, glycine 210, and arginine 211. Lysine 67 (proton donor) is an active-site residue.

Belongs to the OMP decarboxylase family. Type 1 subfamily. In terms of assembly, homodimer.

The enzyme catalyses orotidine 5'-phosphate + H(+) = UMP + CO2. The protein operates within pyrimidine metabolism; UMP biosynthesis via de novo pathway; UMP from orotate: step 2/2. Functionally, catalyzes the decarboxylation of orotidine 5'-monophosphate (OMP) to uridine 5'-monophosphate (UMP). The sequence is that of Orotidine 5'-phosphate decarboxylase from Bradyrhizobium sp. (strain BTAi1 / ATCC BAA-1182).